We begin with the raw amino-acid sequence, 764 residues long: MAATSTAAVDQLAADLGNTSLDNKAAAPAPIDTSAVPEAQAEGAEAAPTPTAAPHPQASASLYVGELDPSVTEAMLFELFSQIGSVASIRVCRDAVTRRSLGYAYVNYNTTADGEKALEELNYTLIKGRPCRIMWSQRDPALRKTGAGNIFIKNLDAAIDNKALHDTFAAFGNILSCKVAQDEHGNSKGYGFVHYETDEAASQAIKHVNGMLLNEKKVYVGHHIPKKDRQSKFEEMKANFTNVYVKNINNEVTDEEFRELFAKFGEVTSSSLARDQEGKSRGFGFVNFTTHEAAAQAVDELNGKDFRGQDLYVGRAQKKHEREEELRKSYEAARLEKANKYQGVNLYIKNLGDDVDDDKLRAMFSEYGPITSAKVMRDSLIEGSEEKDEKDKENKKEGETKEEEQNEGSEKKTEKKGDRKLGKSKGFGFVCFSNPDDATKAVTEMNQRMVDGKPLYVALAQRKDVRKSQLEASIQARNQLRMQQAAAQAGMPQQYMQAPVYYAGQQPGFMPAPGGRGVPFPQGGIVPGVQGGRPGQYPYQQGGRGGVPPQQMPPMGYPINQFGPGAFPPNTPQYMAAMGQVGALGGGRGGPAGRGPQGIPAGIPQGLQGGPAVPGYPPAGRPQNGGGRGTPRGNANFMAAGRGASPIPGAPADLSAGSFLQAQLATTQDPQAQKQIIGENLFPKIQAIQPALAGKITGMLLEMDNAELINLFEDDNALNVKVQEALAVYDEYLKTQGQQPTQQPAEANGEQPKAEEQKPEEQKA.

The tract at residues 36 to 56 (VPEAQAEGAEAAPTPTAAPHP) is disordered. RRM domains are found at residues 60–138 (ASLY…WSQR), 148–225 (GNIF…HHIP), 241–318 (TNVY…RAQK), and 344–462 (VNLY…LAQR). Disordered stretches follow at residues 375-420 (VMRD…GDRK) and 587-634 (GRGG…PRGN). Composition is skewed to basic and acidic residues over residues 387–399 (KDEK…KEGE) and 408–420 (GSEK…GDRK). The span at 587–596 (GRGGPAGRGP) shows a compositional bias: gly residues. Over residues 597–613 (QGIPAGIPQGLQGGPAV) the composition is skewed to low complexity. In terms of domain architecture, PABC spans 657–734 (GSFLQAQLAT…ALAVYDEYLK (78 aa)). The segment covering 735 to 745 (TQGQQPTQQPA) has biased composition (polar residues). The interval 735–764 (TQGQQPTQQPAEANGEQPKAEEQKPEEQKA) is disordered. Basic and acidic residues predominate over residues 752-764 (PKAEEQKPEEQKA).

The protein belongs to the polyadenylate-binding protein type-1 family.

Its subcellular location is the cytoplasm. The protein resides in the nucleus. In terms of biological role, binds the poly(A) tail of mRNA. Appears to be an important mediator of the multiple roles of the poly(A) tail in mRNA biogenesis, stability and translation. In the nucleus, involved in both mRNA cleavage and polyadenylation. Is also required for efficient mRNA export to the cytoplasm. Acts in concert with a poly(A)-specific nuclease (PAN) to affect poly(A) tail shortening, which may occur concomitantly with either nucleocytoplasmic mRNA transport or translational initiation. In the cytoplasm, stimulates translation initiation and regulates mRNA decay through translation termination-coupled poly(A) shortening, probably mediated by PAN. The protein is Polyadenylate-binding protein, cytoplasmic and nuclear (pabp-1) of Neurospora crassa (strain ATCC 24698 / 74-OR23-1A / CBS 708.71 / DSM 1257 / FGSC 987).